Reading from the N-terminus, the 337-residue chain is NADH-quinone oxidoreductase subunit H (337 aa).

The next 9 membrane-spanning stretches (helical) occupy residues 9 to 29 (GIPL…LLLV), 50 to 70 (PNVV…KFVF), 82 to 102 (GIFL…WAVI), 115 to 135 (VGIL…IMAG), 161 to 181 (IGFV…TAIV), 186 to 206 (TIWY…SALA), 245 to 265 (SILL…LPPI), 273 to 293 (VPGV…FAMV), and 313 to 333 (FLPI…GFDI).

This sequence belongs to the complex I subunit 1 family. As to quaternary structure, NDH-1 is composed of 14 different subunits. Subunits NuoA, H, J, K, L, M, N constitute the membrane sector of the complex.

The protein resides in the cell inner membrane. The enzyme catalyses a quinone + NADH + 5 H(+)(in) = a quinol + NAD(+) + 4 H(+)(out). In terms of biological role, NDH-1 shuttles electrons from NADH, via FMN and iron-sulfur (Fe-S) centers, to quinones in the respiratory chain. The immediate electron acceptor for the enzyme in this species is believed to be ubiquinone. Couples the redox reaction to proton translocation (for every two electrons transferred, four hydrogen ions are translocated across the cytoplasmic membrane), and thus conserves the redox energy in a proton gradient. This subunit may bind ubiquinone. The sequence is that of NADH-quinone oxidoreductase subunit H from Parvibaculum lavamentivorans (strain DS-1 / DSM 13023 / NCIMB 13966).